The chain runs to 369 residues: MFCVTPPELETKMNITKGGLVLFSANSNSSCMELSKKIAERLGVEMGKVQVYQEPNRETRVQIQESVRGKDVFIIQTVSKDVNTTIMELLIMVYACKTSCAKSIIGVIPYFPYSKQCKMRKRGSIVSKLLASMMCKAGLTHLITMDLHQKEIQGFFNIPVDNLRASPFLLQYIQEEIPDYRNAVIVAKSPASAKRAQSFAERLRLGIAVIHGEAQDAESDLVDGRHSPPMVRSVAAIHPSLEIPMLIPKEKPPITVVGDVGGRIAIIVDDIIDDVDSFLAAAETLKERGAYKIFVMATHGLLSSDAPRRIEESAIDEVVVTNTIPHEVQKLQCPKIKTVDISMILSEAIRRIHNGESMSYLFRNIGLDD.

The residue at position 1 (methionine 1) is an N-acetylmethionine. Threonine 5 carries the post-translational modification Phosphothreonine. Serine 219, serine 227, and serine 233 each carry phosphoserine.

The protein belongs to the ribose-phosphate pyrophosphokinase family. In terms of assembly, binds to PRPS1 and PRPS2. In terms of tissue distribution, ubiquitous.

Seems to play a negative regulatory role in 5-phosphoribose 1-diphosphate synthesis. In Homo sapiens (Human), this protein is Phosphoribosyl pyrophosphate synthase-associated protein 2 (PRPSAP2).